The sequence spans 419 residues: 3-oxo-isoapionate-4-phosphate decarboxylase (419 aa).

The Mg(2+) site is built by Lys179, Asp181, and Glu182. Lys179 carries the N6-carboxylysine modification.

Belongs to the RuBisCO large chain family. Requires Mg(2+) as cofactor.

The catalysed reaction is 3-oxoisoapionate 4-phosphate + H(+) = L-erythrulose 1-phosphate + CO2. It participates in carbohydrate metabolism. Involved in catabolism of D-apiose. Catalyzes the decarboxylation of 3-oxo-isoapionate 4-phosphate to L-erythrulose 1-phosphate. The chain is 3-oxo-isoapionate-4-phosphate decarboxylase from Rhizobium rhizogenes (strain K84 / ATCC BAA-868) (Agrobacterium radiobacter).